The following is a 1705-amino-acid chain: Protein TIC 214 (1705 aa).

The next 5 membrane-spanning stretches (helical) occupy residues 18-38, 67-87, 127-147, 175-195, and 218-238; these read IINS…FSIG, FITG…HLAL, LSIQ…HFIL, VGWI…LVWI, and SMSM…HYLG.

The protein belongs to the TIC214 family. As to quaternary structure, part of the Tic complex.

The protein localises to the plastid. It localises to the chloroplast inner membrane. Its function is as follows. Involved in protein precursor import into chloroplasts. May be part of an intermediate translocation complex acting as a protein-conducting channel at the inner envelope. The polypeptide is Protein TIC 214 (Helianthus annuus (Common sunflower)).